Reading from the N-terminus, the 287-residue chain is MTVTSPIVDRYAVFGHPIGHSKSPFIHGQFAALTQESLTYEAILAPIDGFEASLKSFFSSGGKGANVTVPFKEQAFALCDSLSAEAALAGAVNTLSLLADGSIRGDNTDGLGLVADLISHLGSLQHKRVLLVGAGGAARGCILPLLNAGVGQLVITNRTQTKAKDLVDIFSQLEEGIYKDKLQALSMSELTGEFELVINSTSASLAGELPPLPQSIIGSTTVCYDMMYGAMPTAFNQWALQQGAAKVIDGLGMLVGQAAKSFALWRTVEPDTAVVLKLLREKLQLDI.

Residues 21 to 23 (SKS) and Thr-68 contribute to the shikimate site. The Proton acceptor role is filled by Lys-72. Positions 93 and 109 each coordinate shikimate. Residues 133–137 (GAGGA), 157–162 (NRTQTK), and Met-226 contribute to the NADP(+) site. Tyr-228 contacts shikimate. NADP(+) is bound at residue Gly-250.

It belongs to the shikimate dehydrogenase family. Homodimer.

It carries out the reaction shikimate + NADP(+) = 3-dehydroshikimate + NADPH + H(+). It participates in metabolic intermediate biosynthesis; chorismate biosynthesis; chorismate from D-erythrose 4-phosphate and phosphoenolpyruvate: step 4/7. Its function is as follows. Involved in the biosynthesis of the chorismate, which leads to the biosynthesis of aromatic amino acids. Catalyzes the reversible NADPH linked reduction of 3-dehydroshikimate (DHSA) to yield shikimate (SA). This chain is Shikimate dehydrogenase (NADP(+)), found in Shewanella oneidensis (strain ATCC 700550 / JCM 31522 / CIP 106686 / LMG 19005 / NCIMB 14063 / MR-1).